A 243-amino-acid chain; its full sequence is GTP cyclohydrolase 1 type 2 (243 aa).

5 residues coordinate a divalent metal cation: histidine 63, histidine 64, aspartate 102, histidine 209, and glutamate 213.

It belongs to the GTP cyclohydrolase I type 2/NIF3 family. Homohexamer.

The enzyme catalyses GTP + H2O = 7,8-dihydroneopterin 3'-triphosphate + formate + H(+). It functions in the pathway cofactor biosynthesis; 7,8-dihydroneopterin triphosphate biosynthesis; 7,8-dihydroneopterin triphosphate from GTP: step 1/1. Functionally, converts GTP to dihydroneopterin triphosphate. The protein is GTP cyclohydrolase 1 type 2 of Helicobacter pylori (strain J99 / ATCC 700824) (Campylobacter pylori J99).